Reading from the N-terminus, the 239-residue chain is Putative 3-methyladenine DNA glycosylase (239 aa).

It belongs to the DNA glycosylase MPG family.

This chain is Putative 3-methyladenine DNA glycosylase, found in Pseudomonas aeruginosa (strain LESB58).